The chain runs to 423 residues: GPI mannosyltransferase 2 (423 aa).

Helical transmembrane passes span 7-27, 102-122, 128-148, 151-171, 191-211, 228-248, 298-318, 333-353, and 400-420; these read LTLIFIAACLSRILQLTILSG, VILGGTIVANVAFVAATLVLY, IFNPTFAFLTSLLYLLPPTAT, APYTEPIYSLLTFSGIYLLSI, TGIFNSITLMCFAVFGDAHIF, FLSAILVVAPFFMFQHYTETV, LAMPILFFSLAGVVKFFSHLV, PPPILFELYSVHVLTMALLLF, and YWIGWTVVWGAVAAVLWAGHY.

This sequence belongs to the PIGV family.

It is found in the endoplasmic reticulum membrane. Its pathway is glycolipid biosynthesis; glycosylphosphatidylinositol-anchor biosynthesis. Functionally, mannosyltransferase involved in glycosylphosphatidylinositol-anchor biosynthesis. Transfers the second mannose to the glycosylphosphatidylinositol during GPI precursor assembly. The protein is GPI mannosyltransferase 2 (GPI18) of Cryptococcus neoformans var. neoformans serotype D (strain JEC21 / ATCC MYA-565) (Filobasidiella neoformans).